A 305-amino-acid polypeptide reads, in one-letter code: tRNA pseudouridine synthase B (305 aa).

Catalysis depends on aspartate 39, which acts as the Nucleophile.

The protein belongs to the pseudouridine synthase TruB family. Type 1 subfamily.

It carries out the reaction uridine(55) in tRNA = pseudouridine(55) in tRNA. Its function is as follows. Responsible for synthesis of pseudouridine from uracil-55 in the psi GC loop of transfer RNAs. This is tRNA pseudouridine synthase B from Staphylococcus aureus (strain MW2).